A 445-amino-acid chain; its full sequence is Tubulin beta chain (445 aa).

GTP-binding residues include Gln-11, Glu-69, Ser-138, Gly-142, Thr-143, Gly-144, Asn-204, and Asn-226. Glu-69 is a Mg(2+) binding site.

This sequence belongs to the tubulin family. In terms of assembly, dimer of alpha and beta chains. A typical microtubule is a hollow water-filled tube with an outer diameter of 25 nm and an inner diameter of 15 nM. Alpha-beta heterodimers associate head-to-tail to form protofilaments running lengthwise along the microtubule wall with the beta-tubulin subunit facing the microtubule plus end conferring a structural polarity. Microtubules usually have 13 protofilaments but different protofilament numbers can be found in some organisms and specialized cells. Mg(2+) is required as a cofactor.

It localises to the cytoplasm. The protein localises to the cytoskeleton. Tubulin is the major constituent of microtubules, a cylinder consisting of laterally associated linear protofilaments composed of alpha- and beta-tubulin heterodimers. Microtubules grow by the addition of GTP-tubulin dimers to the microtubule end, where a stabilizing cap forms. Below the cap, tubulin dimers are in GDP-bound state, owing to GTPase activity of alpha-tubulin. This chain is Tubulin beta chain (TUB-2), found in Schizophyllum commune (Split gill fungus).